The following is an 862-amino-acid chain: Fork head protein homolog 2 (862 aa).

One can recognise an FHA domain in the interval 83–152; it reads VSIGRNTDPL…NGAKVNFQRT (70 aa). Positions 339-430 form a DNA-binding region, fork-head; the sequence is VKPPHSYATM…QQEFLNKWNT (92 aa). 4 disordered regions span residues 498–528, 611–663, 698–730, and 750–846; these read PSKG…QEQR, SDSA…GTTT, PERG…LQTS, and ESNN…ANAK. Residues 504–520 are compositionally biased toward low complexity; the sequence is PASQQSQPPVSHQNQSQ. Residues 611 to 644 show a composition bias toward polar residues; that stretch reads SDSADKSTNNNGGTKMNLPAISTSSLDENGNLEP. Residues 645–655 show a composition bias toward low complexity; sequence TTTTSSGNSNS. Residue serine 708 is modified to Phosphoserine. The segment covering 712–726 has biased composition (low complexity); it reads SNSNNTNNNGANNSN. Polar residues-rich tracts occupy residues 750 to 770 and 778 to 788; these read ESNN…NVKS and LQFSSTNNTPA. The span at 804 to 829 shows a compositional bias: basic and acidic residues; the sequence is IKAKENENATSEKDSDSNSNDLETKD. Over residues 830–844 the composition is skewed to polar residues; the sequence is INSSPLKNQGGSTAN. Serine 832 and serine 833 each carry phosphoserine.

As to quaternary structure, interacts with MCM1. Interacts with NDD1. Interacts with the origin recognition complex (ORC) composed of ORC1 to ORC6.

It localises to the nucleus. Its subcellular location is the cytoplasm. It is found in the cytosol. Functionally, transcription factor that regulates the expression of the CLB2 cluster of genes during the G2/M phase of the mitotic cell cycle. The CLB2 cluster of genes includes mitotic regulators such as CLB1, CLB2, CDC5 and CDC20 as well as SWI5 and ACE2, transcription factors required for the subsequent temporal wave of cell cycle regulated gene expression in the M/G1 phase interval. Involved in HMRa silencing. FKH1 and FKH2 associate with the coding regions of active genes and influence, in opposing ways, transcriptional elongation and termination, and coordinate early transcription elongation and pre-mRNA processing. Both FKH1 and FKH2 play a role as regulators of lifespan in collaboration with the anaphase-promoting complex (APC), likely through combined regulation of stress response, genomic stability, and cell cycle regulation. FKH1 and FKH2 function also in controlling yeast cell morphology by preventing preudohyphal growth. Acts as a rate-limiting replication origin activator via its interaction with the origin recognition complex (ORC). The sequence is that of Fork head protein homolog 2 from Saccharomyces cerevisiae (strain ATCC 204508 / S288c) (Baker's yeast).